The primary structure comprises 908 residues: Protein translocase subunit SecA (908 aa).

Residues Gln-87, 105–109 (GEGKT), and Asp-512 contribute to the ATP site. The interval 866 to 908 (GSDEDDAIAAHTPMIRDGDKVGRNDPCPCGSGRKYKQCHGKLS) is disordered. The segment covering 879–888 (MIRDGDKVGR) has biased composition (basic and acidic residues). 4 residues coordinate Zn(2+): Cys-892, Cys-894, Cys-903, and His-904. The segment covering 898 to 908 (RKYKQCHGKLS) has biased composition (basic residues).

This sequence belongs to the SecA family. In terms of assembly, monomer and homodimer. Part of the essential Sec protein translocation apparatus which comprises SecA, SecYEG and auxiliary proteins SecDF-YajC and YidC. It depends on Zn(2+) as a cofactor.

It is found in the cell inner membrane. The protein localises to the cytoplasm. The enzyme catalyses ATP + H2O + cellular proteinSide 1 = ADP + phosphate + cellular proteinSide 2.. Functionally, part of the Sec protein translocase complex. Interacts with the SecYEG preprotein conducting channel. Has a central role in coupling the hydrolysis of ATP to the transfer of proteins into and across the cell membrane, serving both as a receptor for the preprotein-SecB complex and as an ATP-driven molecular motor driving the stepwise translocation of polypeptide chains across the membrane. This is Protein translocase subunit SecA from Shewanella oneidensis (strain ATCC 700550 / JCM 31522 / CIP 106686 / LMG 19005 / NCIMB 14063 / MR-1).